The sequence spans 239 residues: Probable transcriptional regulator ycf27 (239 aa).

The 114-residue stretch at 7–120 (KILVVDDEIS…ELEARIRSLL (114 aa)) folds into the Response regulatory domain. At aspartate 56 the chain carries 4-aspartylphosphate. Residues 76–94 (DIPIIMLTALGDVADRITG) constitute a DNA-binding region (H-T-H motif). A DNA-binding region (ompR/PhoB-type) is located at residues 135–236 (GENLQIGFLK…ARGIGYLFQN (102 aa)).

It is found in the plastid. Its subcellular location is the cyanelle. Its function is as follows. Probable promoter-specific protein mediating the interaction between DNA and RNA polymerase. The sequence is that of Probable transcriptional regulator ycf27 (ycf27) from Cyanophora paradoxa.